The primary structure comprises 205 residues: Adenylyl-sulfate kinase (205 aa).

35-42 (GLSGAGKS) lines the ATP pocket. Ser-109 functions as the Phosphoserine intermediate in the catalytic mechanism.

Belongs to the APS kinase family.

The catalysed reaction is adenosine 5'-phosphosulfate + ATP = 3'-phosphoadenylyl sulfate + ADP + H(+). It participates in sulfur metabolism; hydrogen sulfide biosynthesis; sulfite from sulfate: step 2/3. Functionally, catalyzes the synthesis of activated sulfate. This chain is Adenylyl-sulfate kinase, found in Acaryochloris marina (strain MBIC 11017).